We begin with the raw amino-acid sequence, 821 residues long: Leucine--tRNA ligase (821 aa).

The short motif at 44–54 (PYPSGRIHMGH) is the 'HIGH' region element. A 'KMSKS' region motif is present at residues 589–593 (KMSKS). Residue lysine 592 participates in ATP binding.

The protein belongs to the class-I aminoacyl-tRNA synthetase family.

Its subcellular location is the cytoplasm. The enzyme catalyses tRNA(Leu) + L-leucine + ATP = L-leucyl-tRNA(Leu) + AMP + diphosphate. The chain is Leucine--tRNA ligase from Campylobacter curvus (strain 525.92).